A 393-amino-acid chain; its full sequence is Short chain dehydrogenase sirQ (393 aa).

Leu-54 serves as a coordination point for NADP(+). Residue Ser-233 is the Proton donor of the active site. Lys-259 (lowers pKa of active site Tyr) is an active-site residue. Ala-286 serves as a coordination point for NADP(+).

It belongs to the short-chain dehydrogenases/reductases (SDR) family. Highly divergent.

The protein operates within mycotoxin biosynthesis. Its function is as follows. Short chain dehydrogenase; part of the gene cluster that mediates the biosynthesis of sirodesmin PL, an epipolythiodioxopiperazine (ETP) characterized by a disulfide bridged cyclic dipeptide and that acts as a phytotoxin which is involved in the blackleg didease of canola. SirD catalyzes the O-prenylation of L-tyrosine (L-Tyr) in the presence of dimethylallyl diphosphate (DMAPP) to yield 4-O-dimethylallyl-L-Tyr, and therefore represents probably the first pathway-specific enzyme in the biosynthesis of sirodesmin PL. 4-O-dimethylallyl-L-Tyr, then undergoes condensation with L-Ser in a reaction catalyzed by the non-ribosomal peptide synthase sirP to form the diketopiperazine (DKP) backbone. Further bishydroxylation of the DKP performed by the cytochrome P450 monooxygenase sirC leads to the production of the intermediate phomamide. This step is essential to form the reactive thiol group required for toxicity of sirodesmin PL. The next steps of sirodesmin biosynthesis are not well understood yet, but some predictions could be made from intermediate compounds identification. Phomamide is converted into phomalizarine via oxidation, probably by sirT. Further oxidation, methylation (by sirM or sirN) and reduction steps convert phomalizarine to deacetyl sirodesmin. Finally, acetyltransferase sirH probably acetylates deacetyl sirodesmin to produce sirodesmin PL. The sequence is that of Short chain dehydrogenase sirQ from Leptosphaeria maculans (Blackleg fungus).